The primary structure comprises 155 residues: Protein FAM162B (155 aa).

Residues 95–114 (VKACYIMMGLTIFACLVMIV) form a helical membrane-spanning segment.

This sequence belongs to the UPF0389 family.

Its subcellular location is the membrane. The sequence is that of Protein FAM162B (fam162b) from Danio rerio (Zebrafish).